The primary structure comprises 233 residues: tRNA (guanine-N(7)-)-methyltransferase (233 aa).

Residues Glu64, Glu89, Asp116, and Asp138 each coordinate S-adenosyl-L-methionine. Asp138 is a catalytic residue. Substrate-binding positions include Lys142, Asp174, and 212-215 (TRYE).

Belongs to the class I-like SAM-binding methyltransferase superfamily. TrmB family.

It catalyses the reaction guanosine(46) in tRNA + S-adenosyl-L-methionine = N(7)-methylguanosine(46) in tRNA + S-adenosyl-L-homocysteine. The protein operates within tRNA modification; N(7)-methylguanine-tRNA biosynthesis. Functionally, catalyzes the formation of N(7)-methylguanine at position 46 (m7G46) in tRNA. The protein is tRNA (guanine-N(7)-)-methyltransferase of Rhizobium johnstonii (strain DSM 114642 / LMG 32736 / 3841) (Rhizobium leguminosarum bv. viciae).